A 385-amino-acid polypeptide reads, in one-letter code: Arginine biosynthesis bifunctional protein ArgJ (385 aa).

The substrate site is built by Thr-142, Lys-168, Thr-179, Glu-259, Asn-380, and Thr-385. Residue Thr-179 is the Nucleophile of the active site.

This sequence belongs to the ArgJ family. In terms of assembly, heterotetramer of two alpha and two beta chains.

It is found in the cytoplasm. The catalysed reaction is N(2)-acetyl-L-ornithine + L-glutamate = N-acetyl-L-glutamate + L-ornithine. It carries out the reaction L-glutamate + acetyl-CoA = N-acetyl-L-glutamate + CoA + H(+). The protein operates within amino-acid biosynthesis; L-arginine biosynthesis; L-ornithine and N-acetyl-L-glutamate from L-glutamate and N(2)-acetyl-L-ornithine (cyclic): step 1/1. It functions in the pathway amino-acid biosynthesis; L-arginine biosynthesis; N(2)-acetyl-L-ornithine from L-glutamate: step 1/4. Catalyzes two activities which are involved in the cyclic version of arginine biosynthesis: the synthesis of N-acetylglutamate from glutamate and acetyl-CoA as the acetyl donor, and of ornithine by transacetylation between N(2)-acetylornithine and glutamate. The polypeptide is Arginine biosynthesis bifunctional protein ArgJ (Leptospira interrogans serogroup Icterohaemorrhagiae serovar Lai (strain 56601)).